The following is a 60-amino-acid chain: Large ribosomal subunit protein bL32 (60 aa).

The interval 1-60 (MAVQQNKKSRSARDMRRSHDALESNALSVEKSTGEVHLRHHVSPDGFYRGRKVVDKGSDE) is disordered. The segment covering 11–22 (SARDMRRSHDAL) has biased composition (basic and acidic residues).

This sequence belongs to the bacterial ribosomal protein bL32 family.

The polypeptide is Large ribosomal subunit protein bL32 (Pseudomonas aeruginosa (strain LESB58)).